The following is a 208-amino-acid chain: MSKVLFVKANDRPAEQAVSSKMYETFVTTYKEANPNTEITELDLFALDLPYYGNIAISGGYKRSQGMELTAEEEKAVATVDQYLNQFLEADKVVFAFPLWNFTVPAPLITYISYLSQAGKTFKYTANGPEGLAGGKKVVVLGARGSDYSSEQMAPMEMAVNYVTTVLGFWGITNPETVVIEGHNQYPDRSQQIVEEGLENVKKVAAKF.

This sequence belongs to the azoreductase type 1 family. As to quaternary structure, homodimer. It depends on FMN as a cofactor.

The catalysed reaction is 2 a quinone + NADH + H(+) = 2 a 1,4-benzosemiquinone + NAD(+). It catalyses the reaction N,N-dimethyl-1,4-phenylenediamine + anthranilate + 2 NAD(+) = 2-(4-dimethylaminophenyl)diazenylbenzoate + 2 NADH + 2 H(+). Its function is as follows. Quinone reductase that provides resistance to thiol-specific stress caused by electrophilic quinones. In terms of biological role, also exhibits azoreductase activity. Catalyzes the reductive cleavage of the azo bond in aromatic azo compounds to the corresponding amines. In Bacillus anthracis, this protein is FMN-dependent NADH:quinone oxidoreductase 2.